A 529-amino-acid chain; its full sequence is 56 kDa type-specific antigen (529 aa).

The first 22 residues, methionine 1–alanine 22, serve as a signal peptide directing secretion. The helical transmembrane segment at leucine 67–phenylalanine 87 threads the bilayer. The segment covering glycine 106–serine 116 has biased composition (basic and acidic residues). Disordered regions lie at residues glycine 106 to threonine 134 and aspartate 392 to glutamate 424. Residues threonine 477 to alanine 492 traverse the membrane as a helical segment.

The protein resides in the cell membrane. May be an adherent factor for rickettsial adsorption to the host-cell surface and a determinant of virulence of individual rickettsial strain. It is the major outer membrane protein. This is 56 kDa type-specific antigen from Orientia tsutsugamushi (Rickettsia tsutsugamushi).